Consider the following 550-residue polypeptide: Luciferin 4-monooxygenase (550 aa).

Residues S548–L550 carry the Microbody targeting signal motif.

Belongs to the ATP-dependent AMP-binding enzyme family. Mg(2+) is required as a cofactor.

It is found in the peroxisome. It catalyses the reaction firefly D-luciferin + ATP + O2 = firefly oxyluciferin + hnu + AMP + CO2 + diphosphate. In terms of biological role, produces green light with a wavelength of 562 nm. The polypeptide is Luciferin 4-monooxygenase (Photinus pyralis (Common eastern firefly)).